Here is a 416-residue protein sequence, read N- to C-terminus: Protein LAZY 1 (416 aa).

A helical membrane pass occupies residues 63–83 (FTFGGSGLLTIGTLGIAAVAI). The IGT motif signature appears at 69-75 (GLLTIGT). Disordered stretches follow at residues 266–306 (AAAA…GMPA) and 337–361 (KKSRNRGATDNGGGAVATGDPDGPL). The span at 270–282 (GVGGDRAGKGGGY) shows a compositional bias: gly residues. Residues 278–295 (KGGGYKTMKKRKVKDEKG) carry the Nuclear localization signal motif.

It belongs to the LAZY family. In terms of tissue distribution, expressed specifically in the cells at the inner side of the vascular bundles of young leaf sheaths and peripheral cylinders of vascular bundles in the unelongated stems. Expressed in the leaf sheath pulvinus and the lamina joint.

It localises to the cell membrane. The protein resides in the nucleus. Its function is as follows. Involved in the regulation of shoot gravitropism and tiller angle through negative regulation of basipetal polar auxin transport (PAT). Acts as positive regulator of lateral auxin transport. Promotes vertical shoot growth. LAZY1 and TAC1 play opposite functions in the regulation of tiller growth angle. In Oryza sativa subsp. japonica (Rice), this protein is Protein LAZY 1.